Consider the following 622-residue polypeptide: Probable methionine--tRNA ligase, mitochondrial (622 aa).

A 'HIGH' region motif is present at residues 67–79 (PIFYVNASPHVGH). The 'KMSKS' region motif lies at 366–370 (KMSKS). Lys369 is a binding site for ATP. The tract at residues 592-622 (LDDIKGMGPDAGSKKHSSGNKPSSGNKKPTA) is disordered. The span at 610–622 (GNKPSSGNKKPTA) shows a compositional bias: low complexity.

The protein belongs to the class-I aminoacyl-tRNA synthetase family.

It localises to the mitochondrion matrix. It catalyses the reaction tRNA(Met) + L-methionine + ATP = L-methionyl-tRNA(Met) + AMP + diphosphate. The polypeptide is Probable methionine--tRNA ligase, mitochondrial (Neurospora crassa (strain ATCC 24698 / 74-OR23-1A / CBS 708.71 / DSM 1257 / FGSC 987)).